The following is a 260-amino-acid chain: Carbonic anhydrase 3 (260 aa).

The residue at position 2 (Ala2) is an N-acetylalanine. The Alpha-carbonic anhydrase domain maps to 3 to 259; the sequence is KEWGYADHNG…IKGRIVKASF (257 aa). Residues Ser29, Ser43, Ser50, and Ser55 each carry the phosphoserine modification. The segment at 64–67 is involved in proton transfer; that stretch reads KTCR. Thr73 carries the phosphothreonine modification. The Zn(2+) site is built by His94, His96, and His119. Residue Tyr127 is modified to Phosphotyrosine. An S-glutathionyl cysteine mark is found at Cys182 and Cys187. 198 to 199 provides a ligand contact to substrate; sequence TT. Thr216 carries the phosphothreonine modification. Ser219 is subject to Phosphoserine.

It belongs to the alpha-carbonic anhydrase family. Zn(2+) serves as cofactor. In terms of processing, S-thiolated both by thiol-disulfide exchange with glutathione disulfide and by oxyradical-initiated S-thiolation with reduced glutathione. Post-translationally, S-glutathionylated in hepatocytes under oxidative stress.

The protein localises to the cytoplasm. It catalyses the reaction hydrogencarbonate + H(+) = CO2 + H2O. With respect to regulation, inhibited by acetazolamide. Its function is as follows. Reversible hydration of carbon dioxide. The sequence is that of Carbonic anhydrase 3 (CA3) from Bos taurus (Bovine).